The primary structure comprises 338 residues: Ketol-acid reductoisomerase (NADP(+)) (338 aa).

One can recognise a KARI N-terminal Rossmann domain in the interval 1–181 (MKVYYDKDAD…GGTKGGVIET (181 aa)). NADP(+) contacts are provided by residues 24-27 (YGSQ), Arg-47, and Ser-52. Residue His-107 is part of the active site. Gly-133 serves as a coordination point for NADP(+). The 146-residue stretch at 182–327 (NFREETETDL…GQLRDMMPWI (146 aa)) folds into the KARI C-terminal knotted domain. Mg(2+)-binding residues include Asp-190, Glu-194, Glu-226, and Glu-230. Residue Ser-251 participates in substrate binding.

This sequence belongs to the ketol-acid reductoisomerase family. It depends on Mg(2+) as a cofactor.

The catalysed reaction is (2R)-2,3-dihydroxy-3-methylbutanoate + NADP(+) = (2S)-2-acetolactate + NADPH + H(+). It catalyses the reaction (2R,3R)-2,3-dihydroxy-3-methylpentanoate + NADP(+) = (S)-2-ethyl-2-hydroxy-3-oxobutanoate + NADPH + H(+). It participates in amino-acid biosynthesis; L-isoleucine biosynthesis; L-isoleucine from 2-oxobutanoate: step 2/4. It functions in the pathway amino-acid biosynthesis; L-valine biosynthesis; L-valine from pyruvate: step 2/4. Its function is as follows. Involved in the biosynthesis of branched-chain amino acids (BCAA). Catalyzes an alkyl-migration followed by a ketol-acid reduction of (S)-2-acetolactate (S2AL) to yield (R)-2,3-dihydroxy-isovalerate. In the isomerase reaction, S2AL is rearranged via a Mg-dependent methyl migration to produce 3-hydroxy-3-methyl-2-ketobutyrate (HMKB). In the reductase reaction, this 2-ketoacid undergoes a metal-dependent reduction by NADPH to yield (R)-2,3-dihydroxy-isovalerate. The chain is Ketol-acid reductoisomerase (NADP(+)) from Dechloromonas aromatica (strain RCB).